Reading from the N-terminus, the 268-residue chain is Glutamate racemase (268 aa).

Residues 10–11 and 42–43 each bind substrate; these read DS and YG. Residue Cys73 is the Proton donor/acceptor of the active site. 74-75 serves as a coordination point for substrate; that stretch reads NT. The active-site Proton donor/acceptor is the Cys184. 185–186 is a substrate binding site; that stretch reads TH.

Belongs to the aspartate/glutamate racemases family.

The enzyme catalyses L-glutamate = D-glutamate. Its pathway is cell wall biogenesis; peptidoglycan biosynthesis. Provides the (R)-glutamate required for cell wall biosynthesis. The polypeptide is Glutamate racemase (Limosilactobacillus fermentum (strain NBRC 3956 / LMG 18251) (Lactobacillus fermentum)).